The sequence spans 459 residues: Protein king tubby (459 aa).

Residues H114–G205 are disordered. Residues P123–D155 are compositionally biased toward polar residues. The residue at position 152 (S152) is a Phosphoserine.

Belongs to the TUB family.

It is found in the cytoplasm. Its subcellular location is the nucleus. The protein localises to the cell projection. It localises to the cilium membrane. The protein resides in the rhabdomere. This Drosophila persimilis (Fruit fly) protein is Protein king tubby.